The primary structure comprises 365 residues: Peptide chain release factor 1 (365 aa).

Gln236 carries the post-translational modification N5-methylglutamine.

It belongs to the prokaryotic/mitochondrial release factor family. Methylated by PrmC. Methylation increases the termination efficiency of RF1.

Its subcellular location is the cytoplasm. Its function is as follows. Peptide chain release factor 1 directs the termination of translation in response to the peptide chain termination codons UAG and UAA. This Latilactobacillus sakei subsp. sakei (strain 23K) (Lactobacillus sakei subsp. sakei) protein is Peptide chain release factor 1.